A 345-amino-acid chain; its full sequence is NADPH dehydrogenase (345 aa).

FMN is bound at residue 23-26 (SPMC). Y28 contacts substrate. Positions 60 and 102 each coordinate FMN. 164–167 (HGAH) provides a ligand contact to substrate. FMN is bound by residues R215 and 307–308 (GR).

The protein belongs to the NADH:flavin oxidoreductase/NADH oxidase family. NamA subfamily. As to quaternary structure, homotetramer. The cofactor is FMN.

The enzyme catalyses A + NADPH + H(+) = AH2 + NADP(+). Catalyzes the reduction of the double bond of an array of alpha,beta-unsaturated aldehydes and ketones. It also reduces the nitro group of nitroester and nitroaromatic compounds. It could have a role in detoxification processes. The chain is NADPH dehydrogenase from Bacillus anthracis (strain CDC 684 / NRRL 3495).